Reading from the N-terminus, the 269-residue chain is Cleavage and polyadenylation specificity factor subunit 4 (269 aa).

5 consecutive C3H1-type zinc fingers follow at residues 35–61, 62–89, 90–117, 118–142, and 143–169; these read KSGA…RHIS, GEKT…HEYD, MTKM…HIDP, ESKI…RHRH, and TRRV…HPRF. The interval 173–199 is disordered; sequence MGTTEQPPLPQQTQPPAKQSNNPPLQR. Serine 200, serine 202, and serine 212 each carry phosphoserine. The CCHC-type zinc-finger motif lies at 243 to 260; sequence VTCYKCGEKGHYANRCTK. Position 267 is a phosphoserine (serine 267).

It belongs to the CPSF4/YTH1 family. Component of the cleavage and polyadenylation specificity factor (CPSF) complex, composed of CPSF1, CPSF2, CPSF3, CPSF4 and FIP1L1. Interacts with FIP1L1. As to quaternary structure, (Microbial infection) Interacts with influenza A virus NS1 blocks processing of pre-mRNAs, thereby preventing nuclear export of host cell mRNAs.

Its subcellular location is the nucleus. Component of the cleavage and polyadenylation specificity factor (CPSF) complex that play a key role in pre-mRNA 3'-end formation, recognizing the AAUAAA signal sequence and interacting with poly(A) polymerase and other factors to bring about cleavage and poly(A) addition. CPSF4 binds RNA polymers with a preference for poly(U). The protein is Cleavage and polyadenylation specificity factor subunit 4 (CPSF4) of Homo sapiens (Human).